Reading from the N-terminus, the 325-residue chain is Dehydrogenase/reductase SDR family member 7B (325 aa).

The Cytoplasmic portion of the chain corresponds to 1–17 (MISPSSRKGMLKERAMD). The helical; Signal-anchor for type II membrane protein transmembrane segment at 18 to 38 (LVTQTTILPLLFGCLGIFSLF) threads the bilayer. The Lumenal segment spans residues 39 to 325 (RLLQRTRSKA…ARKERKSKNS (287 aa)). NAD(+) contacts are provided by Ser62 and Leu64. Ser194 contacts substrate. The NAD(+) site is built by Tyr207, Lys211, and Thr242. The active-site Proton acceptor is Tyr207.

It belongs to the short-chain dehydrogenases/reductases (SDR) family.

The protein resides in the endoplasmic reticulum membrane. Putative oxidoreductase. The chain is Dehydrogenase/reductase SDR family member 7B (Dhrs7b) from Rattus norvegicus (Rat).